The chain runs to 147 residues: Large ribosomal subunit protein uL13 (147 aa).

This sequence belongs to the universal ribosomal protein uL13 family. As to quaternary structure, part of the 50S ribosomal subunit.

In terms of biological role, this protein is one of the early assembly proteins of the 50S ribosomal subunit, although it is not seen to bind rRNA by itself. It is important during the early stages of 50S assembly. The chain is Large ribosomal subunit protein uL13 from Lactiplantibacillus plantarum (strain ATCC BAA-793 / NCIMB 8826 / WCFS1) (Lactobacillus plantarum).